A 954-amino-acid polypeptide reads, in one-letter code: Glycine dehydrogenase (decarboxylating) (954 aa).

Lysine 704 is modified (N6-(pyridoxal phosphate)lysine).

It belongs to the GcvP family. The glycine cleavage system is composed of four proteins: P, T, L and H. The cofactor is pyridoxal 5'-phosphate.

It carries out the reaction N(6)-[(R)-lipoyl]-L-lysyl-[glycine-cleavage complex H protein] + glycine + H(+) = N(6)-[(R)-S(8)-aminomethyldihydrolipoyl]-L-lysyl-[glycine-cleavage complex H protein] + CO2. In terms of biological role, the glycine cleavage system catalyzes the degradation of glycine. The P protein binds the alpha-amino group of glycine through its pyridoxal phosphate cofactor; CO(2) is released and the remaining methylamine moiety is then transferred to the lipoamide cofactor of the H protein. The protein is Glycine dehydrogenase (decarboxylating) of Vibrio vulnificus (strain CMCP6).